Reading from the N-terminus, the 205-residue chain is MTTDFLFPKIADCSYVSCYCEENVWKLCEQVKRTRPEELSKCYAVFVSNEGRTVPLWRQKAGRGDDQVVIWDYHVFFMHNPLPNRCLVFDLDTTLPFPTYFHKYVTETFRSDLALRPEHHRFFRVIPADTYLIEFSSDRRHMRRPDGSWIKPPPSYPPILSNTNLHCLGDFICMSAGKGPGAVYSLSEFVQNFYKSPHVGVQQNK.

Catalysis depends on residues cysteine 20, histidine 74, and aspartate 90.

This sequence belongs to the NTAQ1 family. Monomer.

The enzyme catalyses N-terminal L-glutaminyl-[protein] + H2O = N-terminal L-glutamyl-[protein] + NH4(+). Mediates the side-chain deamidation of N-terminal glutamine residues to glutamate, an important step in N-end rule pathway of protein degradation. Conversion of the resulting N-terminal glutamine to glutamate renders the protein susceptible to arginylation, polyubiquitination and degradation as specified by the N-end rule. Does not act on substrates with internal or C-terminal glutamine and does not act on non-glutamine residues in any position. The polypeptide is Protein N-terminal glutamine amidohydrolase (tun) (Drosophila virilis (Fruit fly)).